Consider the following 648-residue polypeptide: Biosynthetic arginine decarboxylase (648 aa).

Position 109 is an N6-(pyridoxal phosphate)lysine (Lys-109). Substrate is bound at residue 291–301 (LDVGGGLGVDY).

The protein belongs to the Orn/Lys/Arg decarboxylase class-II family. SpeA subfamily. Mg(2+) serves as cofactor. Requires pyridoxal 5'-phosphate as cofactor.

The catalysed reaction is L-arginine + H(+) = agmatine + CO2. Its pathway is amine and polyamine biosynthesis; agmatine biosynthesis; agmatine from L-arginine: step 1/1. Functionally, catalyzes the biosynthesis of agmatine from arginine. The polypeptide is Biosynthetic arginine decarboxylase (Prochlorococcus marinus (strain MIT 9303)).